Reading from the N-terminus, the 542-residue chain is Putative ankyrin repeat protein FPV115 (542 aa).

8 ANK repeats span residues 33 to 62 (FRNL…DPNS), 157 to 186 (DGLL…KTNL), 218 to 247 (NDIN…DINT), 251 to 281 (KGKT…DINV), 285 to 314 (EGLT…DVKV), 316 to 345 (TTST…EFIT), 347 to 375 (DYLS…DVNS), and 378 to 407 (CIST…NINA).

This is Putative ankyrin repeat protein FPV115 from Fowlpox virus (strain NVSL) (FPV).